We begin with the raw amino-acid sequence, 132 residues long: Small ribosomal subunit protein uS8 (132 aa).

It belongs to the universal ribosomal protein uS8 family. In terms of assembly, part of the 30S ribosomal subunit. Contacts proteins S5 and S12.

In terms of biological role, one of the primary rRNA binding proteins, it binds directly to 16S rRNA central domain where it helps coordinate assembly of the platform of the 30S subunit. The sequence is that of Small ribosomal subunit protein uS8 from Ehrlichia canis (strain Jake).